Here is a 355-residue protein sequence, read N- to C-terminus: S-adenosylmethionine:tRNA ribosyltransferase-isomerase (355 aa).

The protein belongs to the QueA family. As to quaternary structure, monomer.

It is found in the cytoplasm. It carries out the reaction 7-aminomethyl-7-carbaguanosine(34) in tRNA + S-adenosyl-L-methionine = epoxyqueuosine(34) in tRNA + adenine + L-methionine + 2 H(+). The protein operates within tRNA modification; tRNA-queuosine biosynthesis. Its function is as follows. Transfers and isomerizes the ribose moiety from AdoMet to the 7-aminomethyl group of 7-deazaguanine (preQ1-tRNA) to give epoxyqueuosine (oQ-tRNA). In Burkholderia ambifaria (strain ATCC BAA-244 / DSM 16087 / CCUG 44356 / LMG 19182 / AMMD) (Burkholderia cepacia (strain AMMD)), this protein is S-adenosylmethionine:tRNA ribosyltransferase-isomerase.